The primary structure comprises 310 residues: Methionyl-tRNA formyltransferase (310 aa).

Ser-109 to Pro-112 is a (6S)-5,6,7,8-tetrahydrofolate binding site.

The protein belongs to the Fmt family.

It catalyses the reaction L-methionyl-tRNA(fMet) + (6R)-10-formyltetrahydrofolate = N-formyl-L-methionyl-tRNA(fMet) + (6S)-5,6,7,8-tetrahydrofolate + H(+). Its function is as follows. Attaches a formyl group to the free amino group of methionyl-tRNA(fMet). The formyl group appears to play a dual role in the initiator identity of N-formylmethionyl-tRNA by promoting its recognition by IF2 and preventing the misappropriation of this tRNA by the elongation apparatus. This chain is Methionyl-tRNA formyltransferase, found in Chloroflexus aurantiacus (strain ATCC 29366 / DSM 635 / J-10-fl).